Reading from the N-terminus, the 465-residue chain is Pancreatic triacylglycerol lipase (465 aa).

Positions 1–16 are cleaved as a signal peptide; it reads MLLLWILSLFLETVAG. Intrachain disulfides connect C20–C26 and C107–C118. Residue S169 is the Nucleophile of the active site. The active-site Charge relay system is the D193. The Ca(2+) site is built by E204, R207, D209, and D212. An intrachain disulfide couples C254 to C278. H280 functions as the Charge relay system in the catalytic mechanism. Cystine bridges form between C302-C313 and C316-C321. 3 N-linked (GlcNAc...) asparagine glycosylation sites follow: N351, N398, and N425. Positions 355 to 465 constitute a PLAT domain; the sequence is WRYRIAVTLS…EEVLLTLQPC (111 aa). A disulfide bond links C449 and C465.

The protein belongs to the AB hydrolase superfamily. Lipase family. As to quaternary structure, forms a 1:1 stoichiometric complex with (pro)colipase/CLPS.

The protein resides in the secreted. It catalyses the reaction a triacylglycerol + H2O = a diacylglycerol + a fatty acid + H(+). The catalysed reaction is 1,2,3-tributanoylglycerol + H2O = dibutanoylglycerol + butanoate + H(+). It carries out the reaction 1,2,3-tri-(9Z-octadecenoyl)-glycerol + H2O = di-(9Z)-octadecenoylglycerol + (9Z)-octadecenoate + H(+). The enzyme catalyses all-trans-retinyl hexadecanoate + H2O = all-trans-retinol + hexadecanoate + H(+). It catalyses the reaction 1,2-di-(9Z-octadecenoyl)-glycerol + H2O = (9Z-octadecenoyl)-glycerol + (9Z)-octadecenoate + H(+). Its activity is regulated as follows. Inhibited by bile salts, is reactivated by (pro)colipase/CLPS. Plays an important role in fat metabolism. It preferentially splits the esters of long-chain fatty acids at positions 1 and 3, producing mainly 2-monoacylglycerol and free fatty acids, and shows considerably higher activity against insoluble emulsified substrates than against soluble ones. The polypeptide is Pancreatic triacylglycerol lipase (PNLIP) (Cavia porcellus (Guinea pig)).